We begin with the raw amino-acid sequence, 87 residues long: Small ribosomal subunit protein uS17 (87 aa).

This sequence belongs to the universal ribosomal protein uS17 family. As to quaternary structure, part of the 30S ribosomal subunit.

In terms of biological role, one of the primary rRNA binding proteins, it binds specifically to the 5'-end of 16S ribosomal RNA. The sequence is that of Small ribosomal subunit protein uS17 from Lacticaseibacillus casei (strain BL23) (Lactobacillus casei).